The primary structure comprises 106 residues: Small ribosomal subunit protein uS17 (106 aa).

This sequence belongs to the universal ribosomal protein uS17 family. Part of the 30S ribosomal subunit.

In terms of biological role, one of the primary rRNA binding proteins, it binds specifically to the 5'-end of 16S ribosomal RNA. The polypeptide is Small ribosomal subunit protein uS17 (Methanosphaera stadtmanae (strain ATCC 43021 / DSM 3091 / JCM 11832 / MCB-3)).